The sequence spans 533 residues: NAD(P)H-quinone oxidoreductase chain 4 (533 aa).

Helical transmembrane passes span 5-25, 36-56, 70-90, 91-111, 115-135, 137-157, 169-189, 210-230, 244-264, 278-298, 315-335, 336-356, 377-397, 418-438, and 465-485; these read VPWL…VPLV, WYAL…YLTG, VSWL…LSMP, LILL…PVSF, LFYF…AVQD, LLFF…LAIW, FILY…AMGF, GFQL…LPIV, TAPV…YALL, FAPL…LTSF, MGFV…GAML, QMIS…ATYD, FALW…SGFV, VVIC…LLSM, and VYII…PKLM.

The protein belongs to the complex I subunit 4 family.

It is found in the cellular thylakoid membrane. It catalyses the reaction a plastoquinone + NADH + (n+1) H(+)(in) = a plastoquinol + NAD(+) + n H(+)(out). The enzyme catalyses a plastoquinone + NADPH + (n+1) H(+)(in) = a plastoquinol + NADP(+) + n H(+)(out). In terms of biological role, NDH-1 shuttles electrons from NAD(P)H, via FMN and iron-sulfur (Fe-S) centers, to quinones in the respiratory chain. The immediate electron acceptor for the enzyme in this species is believed to be plastoquinone. Couples the redox reaction to proton translocation (for every two electrons transferred, four hydrogen ions are translocated across the cytoplasmic membrane), and thus conserves the redox energy in a proton gradient. The sequence is that of NAD(P)H-quinone oxidoreductase chain 4 from Synechococcus sp. (strain CC9605).